A 440-amino-acid chain; its full sequence is Protein disulfide-isomerase A6 (440 aa).

The signal sequence occupies residues 1–19; that stretch reads MALLVLGLVSCTFFLAVNG. 2 consecutive Thioredoxin domains span residues 20 to 133 and 154 to 287; these read LYSS…ALRQ and SDSS…EDIA. Residues Cys55 and Cys58 each act as nucleophile in the active site. Cys55 and Cys58 form a disulfide bridge. A Phosphoserine modification is found at Ser129. The disordered stretch occupies residues 141-161; the sequence is GRSGGYSSGKQGRSDSSSKKD. Positions 152-161 are enriched in basic and acidic residues; it reads GRSDSSSKKD. Ser156 bears the Phosphoserine; by FAM20C mark. The residue at position 158 (Ser158) is a Phosphoserine. Active-site nucleophile residues include Cys190 and Cys193. Cys190 and Cys193 are oxidised to a cystine. A Phosphoserine modification is found at Ser428. A Prevents secretion from ER motif is present at residues 437-440; sequence KDEL.

This sequence belongs to the protein disulfide isomerase family. Part of a large chaperone multiprotein complex comprising DNAJB11, HSP90B1, HSPA5, HYOU, PDIA2, PDIA4, PDIA6, PPIB, SDF2L1, UGGT1 and very small amounts of ERP29, but not, or at very low levels, CALR nor CANX. Interacts with MICA on the surface of tumor cells, leading to MICA disulfide bond reduction which is required for its release from tumor cells. Interacts with ITGB3 following platelet stimulation. Interacts with ERN1; the interaction is direct. Interacts with EIF2AK3. Expressed in platelets (at protein level).

It localises to the endoplasmic reticulum lumen. It is found in the cell membrane. The protein resides in the melanosome. It catalyses the reaction Catalyzes the rearrangement of -S-S- bonds in proteins.. In terms of biological role, may function as a chaperone that inhibits aggregation of misfolded proteins. Negatively regulates the unfolded protein response (UPR) through binding to UPR sensors such as ERN1, which in turn inactivates ERN1 signaling. May also regulate the UPR via the EIF2AK3 UPR sensor. Plays a role in platelet aggregation and activation by agonists such as convulxin, collagen and thrombin. The protein is Protein disulfide-isomerase A6 (PDIA6) of Homo sapiens (Human).